A 259-amino-acid chain; its full sequence is uncharacterized protein (259 aa).

Positions 1–159 constitute an FAD-binding PCMH-type domain; sequence MIEQFFRPDS…TEIIIKDPYR (159 aa).

This is an uncharacterized protein from Escherichia coli O157:H7.